A 235-amino-acid polypeptide reads, in one-letter code: Sugar fermentation stimulation protein homolog (235 aa).

Belongs to the SfsA family.

This chain is Sugar fermentation stimulation protein homolog, found in Aliivibrio salmonicida (strain LFI1238) (Vibrio salmonicida (strain LFI1238)).